The chain runs to 115 residues: NAD(P)H-quinone oxidoreductase subunit M (115 aa).

This sequence belongs to the complex I NdhM subunit family. NDH-1 can be composed of about 15 different subunits; different subcomplexes with different compositions have been identified which probably have different functions.

It is found in the cellular thylakoid membrane. It carries out the reaction a plastoquinone + NADH + (n+1) H(+)(in) = a plastoquinol + NAD(+) + n H(+)(out). The catalysed reaction is a plastoquinone + NADPH + (n+1) H(+)(in) = a plastoquinol + NADP(+) + n H(+)(out). Functionally, NDH-1 shuttles electrons from an unknown electron donor, via FMN and iron-sulfur (Fe-S) centers, to quinones in the respiratory and/or the photosynthetic chain. The immediate electron acceptor for the enzyme in this species is believed to be plastoquinone. Couples the redox reaction to proton translocation, and thus conserves the redox energy in a proton gradient. Cyanobacterial NDH-1 also plays a role in inorganic carbon-concentration. In Prochlorococcus marinus (strain NATL2A), this protein is NAD(P)H-quinone oxidoreductase subunit M.